Consider the following 326-residue polypeptide: Phenylalanine--tRNA ligase alpha subunit (326 aa).

Position 251 (glutamate 251) interacts with Mg(2+).

Belongs to the class-II aminoacyl-tRNA synthetase family. Phe-tRNA synthetase alpha subunit type 1 subfamily. In terms of assembly, tetramer of two alpha and two beta subunits. Requires Mg(2+) as cofactor.

It is found in the cytoplasm. It carries out the reaction tRNA(Phe) + L-phenylalanine + ATP = L-phenylalanyl-tRNA(Phe) + AMP + diphosphate + H(+). The protein is Phenylalanine--tRNA ligase alpha subunit of Alteromonas mediterranea (strain DSM 17117 / CIP 110805 / LMG 28347 / Deep ecotype).